A 217-amino-acid chain; its full sequence is MAHSKAQRRGLLIILSSPSGAGKSTLAKRLRAWDSDISFSVSATTRKPRPGEVDGQDYHFVTVESFKQDVANGDMLEHAHVFGNFYGSPKGPVQTAINEGRDVLFDIDWQGAQQITNSDLGKHTLSIFLLPPSITELRRRLESRGQDDAETISRRMQKSWDEISHWGSYDHVLINEDLDETEEALKTIITATRLRRIQQPSLIEHARALQQEFEDLS.

Positions 10–190 (GLLIILSSPS…TEEALKTIIT (181 aa)) constitute a Guanylate kinase-like domain. 17–24 (SPSGAGKS) lines the ATP pocket.

Belongs to the guanylate kinase family.

It is found in the cytoplasm. The catalysed reaction is GMP + ATP = GDP + ADP. Functionally, essential for recycling GMP and indirectly, cGMP. The protein is Guanylate kinase of Ruegeria sp. (strain TM1040) (Silicibacter sp.).